The chain runs to 575 residues: FAD-linked oxidoreductase asqF (575 aa).

Residues 1 to 23 (MALFRLSAAIVVIFLYIWSPSQR) form the signal peptide. N45 and N80 each carry an N-linked (GlcNAc...) asparagine glycan. In terms of domain architecture, FAD-binding PCMH-type spans 118–306 (NQGRIPLYAA…VRVTMRTYPD (189 aa)). H156 bears the Pros-8alpha-FAD histidine mark. The N-linked (GlcNAc...) asparagine glycan is linked to N370.

Belongs to the oxygen-dependent FAD-linked oxidoreductase family. FAD serves as cofactor.

It carries out the reaction peniprequinolone + A = yaequinolone E + AH2. The protein operates within secondary metabolite biosynthesis. Its pathway is alkaloid biosynthesis. It functions in the pathway mycotoxin biosynthesis. In terms of biological role, FAD-linked oxidoreductase; part of the gene cluster that mediates the biosynthesis of the aspoquinolone mycotoxins. Within the pathway, asqF performs FAD-dependent dehydrogenation of the dimethylallyl quinolone peniprequinolone to yield the conjugated aryl diene yaequinolone E. The first step of the pathway is catalyzed by the nonribosomal peptide synthetase asqK that condenses anthranilic acid and O-methyl-L-tyrosine to produce 4'-methoxycyclopeptin. 4'-methoxycyclopeptin is then converted to 4'-methoxydehydrocyclopeptin by the ketoglutarate-dependent dioxygenase asqJ. AsqJ also converts its first product 4'-methoxydehydrocyclopeptin to 4'-methoxycyclopenin. The following conversion of 4'-methoxycyclopenin into 4'-methoxyviridicatin is catalyzed by the cyclopenase asqI. 4'-methoxyviridicatin is the precursor of quinolone natural products, and is further converted to quinolinone B. The prenyltransferase asqH1 then catalyzes the canonical Friedel-Crafts alkylation of quinolinone B with dimethylallyl cation to yield dimethylallyl quinolone, which is subjected to FAD-dependent dehydrogenation by the FAD-linked oxidoreductase asqF to yield conjugated aryl diene. The delta(3') double bond then serves as the site of the second alkylation with DMAPP catalyzed by the prenyltransferase asqH2 to yield a carbenium ion intermediate, which can be attacked by H(2)O to yield a styrenyl quinolone containing a C3'-hydroxyprenyl chain. The FAD-dependent monooxygenase asqG performs epoxidation of the terminal C7'-C8' olefin. Finally, after dehydratation of the epoxide at C3 by asqC, the quinolone epoxide rearrangement protein asqO catalyzes an enzymatic 3-exo-tet cyclization to yield the cyclopropyl-THF ring system in aspoquinolone. The protein is FAD-linked oxidoreductase asqF of Emericella nidulans (strain FGSC A4 / ATCC 38163 / CBS 112.46 / NRRL 194 / M139) (Aspergillus nidulans).